We begin with the raw amino-acid sequence, 168 residues long: Transcription antitermination protein NusB (168 aa).

It belongs to the NusB family.

Functionally, involved in transcription antitermination. Required for transcription of ribosomal RNA (rRNA) genes. Binds specifically to the boxA antiterminator sequence of the ribosomal RNA (rrn) operons. In Chlamydia trachomatis serovar A (strain ATCC VR-571B / DSM 19440 / HAR-13), this protein is Transcription antitermination protein NusB.